A 462-amino-acid polypeptide reads, in one-letter code: Chromosomal replication initiator protein DnaA (462 aa).

Positions 1 to 84 are domain I, interacts with DnaA modulators; sequence MAVSLWQQCI…RFDIGSRPSA (84 aa). The tract at residues 84 to 125 is domain II; sequence APKPIQATAAVVKPKLESSPQKSQTSFNVNAPEPAATANHRS. Positions 126–342 are domain III, AAA+ region; the sequence is NINPTYQFEN…GALNRVIANA (217 aa). 4 residues coordinate ATP: Gly170, Gly172, Lys173, and Thr174. Positions 343–462 are domain IV, binds dsDNA; sequence NFTGRPITID…YANLIRTLSS (120 aa).

It belongs to the DnaA family. Oligomerizes as a right-handed, spiral filament on DNA at oriC.

Its subcellular location is the cytoplasm. Its function is as follows. Plays an essential role in the initiation and regulation of chromosomal replication. ATP-DnaA binds to the origin of replication (oriC) to initiate formation of the DNA replication initiation complex once per cell cycle. Binds the DnaA box (a 9 base pair repeat at the origin) and separates the double-stranded (ds)DNA. Forms a right-handed helical filament on oriC DNA; dsDNA binds to the exterior of the filament while single-stranded (ss)DNA is stabiized in the filament's interior. The ATP-DnaA-oriC complex binds and stabilizes one strand of the AT-rich DNA unwinding element (DUE), permitting loading of DNA polymerase. After initiation quickly degrades to an ADP-DnaA complex that is not apt for DNA replication. Binds acidic phospholipids. The protein is Chromosomal replication initiator protein DnaA of Shewanella woodyi (strain ATCC 51908 / MS32).